Here is a 332-residue protein sequence, read N- to C-terminus: MPNEVYDVTIIGGGPIGLFSAFYSGLRSMKTKIIDAEPDVGGKVRYFFPEKIIRDIGGIPAITGANLVANLKEQAETFHPTIVCNERVVDVTKLTDGVFQLTSHNGSIHFSKTVVIATGSGTFEVNKLEAMHVDDFPLAINYDVKNLEQFRDKIVTVSGGGNSAIDWAQTLEPIAKKVHLIYRGEDFKAHEESVRELKNSRVEIHIHHEIKELIGANNQLASIKICCNQTQVTKTIETEALFINHGVKVDLGTMAEWGFELADFGIVVDDEMKTTVPGIFACGDSATYSRKIRIIAAGLHEGPIAINSAKKYLEPTARDEAMISTHHESFIG.

The FAD site is built by Asp-35, Lys-43, Phe-48, Val-88, Phe-123, Asp-284, and Thr-325.

This sequence belongs to the ferredoxin--NADP reductase type 2 family. Homodimer. FAD is required as a cofactor.

The enzyme catalyses 2 reduced [2Fe-2S]-[ferredoxin] + NADP(+) + H(+) = 2 oxidized [2Fe-2S]-[ferredoxin] + NADPH. This is Ferredoxin--NADP reductase 1 from Listeria innocua serovar 6a (strain ATCC BAA-680 / CLIP 11262).